A 323-amino-acid polypeptide reads, in one-letter code: MSSNTSAPSLNALAGPLVESLVADAAKLRLIVAQENGARTVDAGANARGSIEAGRRIAEICLGGLGTVTIAPIGPVASWPYTVVVHSADPVLACLGSQYAGWSLADEEGDSGFFALGSGPGRAVAVVEELYKELGYRDNATTTALVLESGSAPPASVVNKVAAATGLAPENVTFIYAPTQSLAGSTQVVARVLEVALHKAHTVGFDLHKILDGIGSAPLSPPHPDFIQAMGRTNDAIIYGGRVQLFVDADDADAKQLAEQIPSTTSADHGAPFAEIFSRVNGDFYKIDGALFSPAEAIVTSVKTGKSFRGGRLEPQLVDASFV.

It belongs to the MCH family. Homodimer.

It localises to the cytoplasm. The catalysed reaction is 5,10-methenyl-5,6,7,8-tetrahydromethanopterin + H2O = N(5)-formyl-5,6,7,8-tetrahydromethanopterin + H(+). It participates in one-carbon metabolism; formaldehyde degradation; formate from formaldehyde (H(4)MPT route): step 3/5. Its function is as follows. Catalyzes the hydrolysis of methenyl-H(4)MPT(+) to 5-formyl-H(4)MPT. This chain is Methenyltetrahydromethanopterin cyclohydrolase (mch), found in Methylorubrum extorquens (strain ATCC 14718 / DSM 1338 / JCM 2805 / NCIMB 9133 / AM1) (Methylobacterium extorquens).